Consider the following 629-residue polypeptide: Chaperone protein HtpG (629 aa).

Residues 1-335 (MSSNPTSSVR…TEDLPLNVSR (335 aa)) form an a; substrate-binding region. A b region spans residues 336-547 (ELVQASPVMA…KDALDSQFEK (212 aa)). Residues 548 to 629 (MMKMMNKDAD…NELVEAATRS (82 aa)) are c.

It belongs to the heat shock protein 90 family. In terms of assembly, homodimer.

Its subcellular location is the cytoplasm. Functionally, molecular chaperone. Has ATPase activity. This Chlorobaculum tepidum (strain ATCC 49652 / DSM 12025 / NBRC 103806 / TLS) (Chlorobium tepidum) protein is Chaperone protein HtpG.